A 599-amino-acid polypeptide reads, in one-letter code: MTDLTTHDLAQPGWQTRDHLNDPVVGELCNRFGPDAFTVQATRTGIPVVWVKREQLLDVVTFLKKQPKPYVMLFDLHGMDERLRTHREGLPAADYSVFYHLISIERNRDIMLKVALAENDMHLPTVTKLFPNANWYERETWEMFGMAFDGHPNLTRIMMPKTWEGHPLRKDYPARATEFDPFELTKQKEDLEMESLTFKPEEWGMKRGTENEDFMFLNLGPNHPSSHGAFRIILQLDGEEIVDCVPDVGYHHRGAEKMGERQSWHSYIPYTDRIEYLGGCVNEMPYVLAVEKLAGIEVPDRVKTIRVMLSELFRINSHLLYISTYIQDVGAMTPVFFAFTDRQKIYDLVEAITGFRMHPAWFRIGGVAHDLPRGWERLLREFLDWMPARLDTYVKSALQNTILKGRTQGVAAYNAKEALEWGVTGAGLRATGIGFDVRKWRPYSGYENFDFEVPVGDGISDCYSRVMLKVEELRQSLRILDQCLKNMPEGPFKADHPLTTPPPKERTLQHIDTLINHFLQVSWGPVMPANESFQMVEATKGINSYYLTSDGGTMSYRTRIRTPSYAHLQQIPSVIRGCLVSDLIVYLGSIDFVMSDVDR.

The segment at M1–E189 is NADH dehydrogenase I subunit C. The tract at residues D213–R599 is NADH dehydrogenase I subunit D.

In the N-terminal section; belongs to the complex I 30 kDa subunit family. It in the C-terminal section; belongs to the complex I 49 kDa subunit family. NDH-1 is composed of 13 different subunits. Subunits NuoB, CD, E, F, and G constitute the peripheral sector of the complex.

The protein resides in the cell inner membrane. The catalysed reaction is a quinone + NADH + 5 H(+)(in) = a quinol + NAD(+) + 4 H(+)(out). Functionally, NDH-1 shuttles electrons from NADH, via FMN and iron-sulfur (Fe-S) centers, to quinones in the respiratory chain. The immediate electron acceptor for the enzyme in this species is believed to be ubiquinone. Couples the redox reaction to proton translocation (for every two electrons transferred, four hydrogen ions are translocated across the cytoplasmic membrane), and thus conserves the redox energy in a proton gradient. The polypeptide is NADH-quinone oxidoreductase subunit C/D (Pectobacterium atrosepticum (strain SCRI 1043 / ATCC BAA-672) (Erwinia carotovora subsp. atroseptica)).